Reading from the N-terminus, the 33-residue chain is Protamine (33 aa).

The tract at residues 1 to 33 (MPRRRRSSSRPVRRRRRPRVSRRRRRRGGRRRR) is disordered.

As to expression, testis.

It localises to the nucleus. It is found in the chromosome. In terms of biological role, protamines substitute for histones in the chromatin of sperm during the haploid phase of spermatogenesis. They compact sperm DNA into a highly condensed, stable and inactive complex. The protein is Protamine of Oncorhynchus keta (Chum salmon).